Reading from the N-terminus, the 1070-residue chain is DNA-directed RNA polymerase subunit beta (1070 aa).

The protein belongs to the RNA polymerase beta chain family. In plastids the minimal PEP RNA polymerase catalytic core is composed of four subunits: alpha, beta, beta', and beta''. When a (nuclear-encoded) sigma factor is associated with the core the holoenzyme is formed, which can initiate transcription.

Its subcellular location is the plastid. It catalyses the reaction RNA(n) + a ribonucleoside 5'-triphosphate = RNA(n+1) + diphosphate. Its function is as follows. DNA-dependent RNA polymerase catalyzes the transcription of DNA into RNA using the four ribonucleoside triphosphates as substrates. In Cuscuta reflexa (Southern Asian dodder), this protein is DNA-directed RNA polymerase subunit beta (rpoB).